The chain runs to 329 residues: Transcription factor RAX1 (329 aa).

HTH myb-type domains follow at residues 9–62 (KTKV…LNYL) and 63–117 (RPNI…RKKL). DNA-binding regions (H-T-H motif) lie at residues 38–62 (WISF…LNYL) and 90–113 (WSII…NTKL). Low complexity-rich tracts occupy residues 122-131 (SDSSSSAMAS) and 144-154 (PTSPTTIPSSS). The tract at residues 122 to 162 (SDSSSSAMASPYLNPISQDVKRPTSPTTIPSSSYNPYAENP) is disordered.

In terms of tissue distribution, mostly expressed in roots. Also present in shoot tips and flower buds.

Its subcellular location is the nucleus. Its function is as follows. Transcription activator of genes involved in the regulation of meristematic competence, such as CUC2. Positively regulates axillary meristems (AMs) formation and development, especially at early phases of vegetative growth, probably by specifying a stem cell niche for AM formation. Modulates the negative regulation mediated by gibberellic acid on the timing of developmental phase transitions. The sequence is that of Transcription factor RAX1 (RAX1) from Arabidopsis thaliana (Mouse-ear cress).